We begin with the raw amino-acid sequence, 341 residues long: Phenylalanine--tRNA ligase alpha subunit (341 aa).

Residue Glu256 coordinates Mg(2+).

It belongs to the class-II aminoacyl-tRNA synthetase family. Phe-tRNA synthetase alpha subunit type 1 subfamily. Tetramer of two alpha and two beta subunits. Mg(2+) is required as a cofactor.

It localises to the cytoplasm. It carries out the reaction tRNA(Phe) + L-phenylalanine + ATP = L-phenylalanyl-tRNA(Phe) + AMP + diphosphate + H(+). This Leptospira interrogans serogroup Icterohaemorrhagiae serovar Lai (strain 56601) protein is Phenylalanine--tRNA ligase alpha subunit.